A 389-amino-acid polypeptide reads, in one-letter code: tRNA-specific 2-thiouridylase MnmA (389 aa).

Residues 33-40 (GLSGGVDS) and L59 contribute to the ATP site. C120 (nucleophile) is an active-site residue. Cysteines 120 and 219 form a disulfide. An ATP-binding site is contributed by G145. The segment at 169–171 (KDQ) is interaction with tRNA. The active-site Cysteine persulfide intermediate is C219. Residues 326 to 327 (RY) are interaction with tRNA.

It belongs to the MnmA/TRMU family.

Its subcellular location is the cytoplasm. The enzyme catalyses S-sulfanyl-L-cysteinyl-[protein] + uridine(34) in tRNA + AH2 + ATP = 2-thiouridine(34) in tRNA + L-cysteinyl-[protein] + A + AMP + diphosphate + H(+). In terms of biological role, catalyzes the 2-thiolation of uridine at the wobble position (U34) of tRNA, leading to the formation of s(2)U34. In Synechococcus sp. (strain WH7803), this protein is tRNA-specific 2-thiouridylase MnmA.